A 313-amino-acid chain; its full sequence is tRNA dimethylallyltransferase (313 aa).

17 to 24 (GPTASGKT) is an ATP binding site. 19–24 (TASGKT) lines the substrate pocket. 4 interaction with substrate tRNA regions span residues 42–45 (DSAL), 166–170 (QRLSR), 247–252 (RCVGYR), and 280–287 (KRQITWLR).

This sequence belongs to the IPP transferase family. Monomer. Mg(2+) is required as a cofactor.

It catalyses the reaction adenosine(37) in tRNA + dimethylallyl diphosphate = N(6)-dimethylallyladenosine(37) in tRNA + diphosphate. Catalyzes the transfer of a dimethylallyl group onto the adenine at position 37 in tRNAs that read codons beginning with uridine, leading to the formation of N6-(dimethylallyl)adenosine (i(6)A). The polypeptide is tRNA dimethylallyltransferase (Proteus mirabilis (strain HI4320)).